The sequence spans 569 residues: CTP synthase (569 aa).

The Glutamine amidotransferase type-1 domain maps to 313-569 (RIAMVGKYTG…NASLERLKKM (257 aa)). Catalysis depends on cysteine 410, which acts as the Nucleophile. Active-site residues include histidine 541 and glutamate 543.

Belongs to the CTP synthase family.

It carries out the reaction UTP + L-glutamine + ATP + H2O = CTP + L-glutamate + ADP + phosphate + 2 H(+). Its pathway is pyrimidine metabolism; CTP biosynthesis via de novo pathway; CTP from UDP: step 2/2. Its function is as follows. Catalyzes the ATP-dependent amination of UTP to CTP with either L-glutamine or ammonia as the source of nitrogen. This Dictyostelium discoideum (Social amoeba) protein is CTP synthase (ctps).